The sequence spans 934 residues: uncharacterized protein (934 aa).

The signal sequence occupies residues 1-24; it reads MKLKKRYLLLGSTLTVSAALILSA. A lipid anchor (N-palmitoyl cysteine) is attached at C25. Residue C25 is the site of S-diacylglycerol cysteine attachment. The segment at 111 to 131 is disordered; it reads SGLKGRAQKNGSTDSSDGSSK. Polar residues predominate over residues 119–131; the sequence is KNGSTDSSDGSSK.

It is found in the cell membrane. This is an uncharacterized protein from Mycoplasma genitalium (strain ATCC 33530 / DSM 19775 / NCTC 10195 / G37) (Mycoplasmoides genitalium).